Consider the following 981-residue polypeptide: uncharacterized protein (981 aa).

One can recognise a Carrier domain in the interval 535–612 (VLLNPVAIEI…SIASIIQKKS (78 aa)). Serine 571 carries the O-(pantetheine 4'-phosphoryl)serine modification.

It belongs to the ATP-dependent AMP-binding enzyme family.

This is an uncharacterized protein from Schizosaccharomyces pombe (strain 972 / ATCC 24843) (Fission yeast).